A 230-amino-acid polypeptide reads, in one-letter code: Thioredoxin domain-containing protein PLP3A (230 aa).

The 85-residue stretch at Val-89 to Phe-173 folds into the Thioredoxin domain. A disordered region spans residues Leu-197 to Asp-230.

The protein belongs to the phosducin family. In terms of assembly, interacts with TUBB2, TUBB3, TUBB4 and TUBB5. Expressed in embryos, shoot meristems, leaf primordia, root meristems, floral meristems and young floral buds.

The protein resides in the cytoplasm. Its subcellular location is the nucleus. Its function is as follows. Tubulin-binding protein involved in microtubule formation. The sequence is that of Thioredoxin domain-containing protein PLP3A (PLP3A) from Arabidopsis thaliana (Mouse-ear cress).